Reading from the N-terminus, the 1890-residue chain is Proteasome-associated protein ECM29 homolog (1890 aa).

HEAT repeat units follow at residues 6–29, 30–67, 130–167, 226–263, 294–330, 334–354, 355–395, 459–496, 498–523, 524–561, 565–602, 685–722, 776–813, 843–882, 938–975, 980–1018, 1118–1155, and 1159–1196; these read NAEIELLERVLLRLGNADSDEKLE, AAVGKFLTPVILKMNSPHNVVRTKVVEVLTHIKRRLSS, DKLFALLLPVLSDMKIPDDPTQRSKLLDLQDKPAICAN, FSDLQIFVPLVVASADTRFSVATPAITELSKLCTMLDF, RVRQKLLQYLIKCRGKSINVTKGLQVTFDGFFGTNTN, KVLALQFMELLLRDGPRELVS, KVSK…SFPQ, GQQHLLLAMLLDNAESKVQIVQNVTSVFLTSCYPEYYA, ARYLLLLIAGERNSLRENVTTYLYGT, SKKDHINYSMLSSIDHSKNRISSESISDFNHLSLEQRR, PSFQVMMSHVHEMAEKRLKKNTACVVVGRTKLPYSLEV, AKQLHLLEPLGNTLKDVSETMRINVAQVYGILWAFGLS, PQFVNAVKIISKCLCESQWLLVSAAVKCISMIGKAVEI, STKLVIFGVVFQLLRSSSARQKIREDSARCLGYLAIGDGE, DDFDQFLNSLIRLVTDPNPHSRQAISVWLLAVVKHCSQ, LAKKELLQFAFTELLSDDSEFVQDVASRGLGLVYSISDS, PYLGKIIPRLYRYKYDPTPKIQNSMISIWDTIVTDSKE, and RYYWEILRELLDNLTCKEWRVRIACCLAVRDLLNRPNG. Residue Ser1213 is modified to Phosphoserine. 8 HEAT repeats span residues 1271–1309, 1313–1350, 1378–1415, 1416–1457, 1497–1534, 1541–1578, 1583–1620, and 1623–1660; these read AVASSILPFLLETGVGHKVPEIRRVSIKTISDMIDSSGS, PHLATLIPCLLRATGELENTKLSYVSTRLGADNEAQEA, SVLEKMTPEVLELMKGSVNLGTKIGCAHFVCLISIRLG, KEMT…LAKE, DYMDSMLPLIFFAMHEEPNEETKANVELWKDLWHDVSP, LNLNVIIPKLESSLTDASWSRKAQAANAIQTIATRLSS, PDRLRLIKLLLSGLQGRTFEGKERLLQALAALTKGLDR, and QICSSIIDAAMREARKREPVYRTMALASLGEILDQLEA. Residues 1680 to 1702 are disordered; sequence RKESDDEDEPNTSQELSADERNK. Position 1683 is a phosphoserine (Ser1683). Thr1691 carries the post-translational modification Phosphothreonine. Ser1692 is subject to Phosphoserine. HEAT repeat units lie at residues 1751–1788 and 1826–1863; these read PVQVSLLAALTKYIERLHVFDESAQVPDLTQINQEKKI and KEALNIVLMLIKRLSGSGNGNQQPLRLIKQSFESNLEK.

Associated with the proteasome.

Its subcellular location is the cytoplasm. The polypeptide is Proteasome-associated protein ECM29 homolog (Drosophila melanogaster (Fruit fly)).